The chain runs to 149 residues: Deoxyuridine 5'-triphosphate nucleotidohydrolase (149 aa).

Substrate is bound by residues 68–70 (RSG), Asn-81, 85–87 (LID), and Met-95.

The protein belongs to the dUTPase family. Mg(2+) is required as a cofactor.

The catalysed reaction is dUTP + H2O = dUMP + diphosphate + H(+). It functions in the pathway pyrimidine metabolism; dUMP biosynthesis; dUMP from dCTP (dUTP route): step 2/2. Its function is as follows. This enzyme is involved in nucleotide metabolism: it produces dUMP, the immediate precursor of thymidine nucleotides and it decreases the intracellular concentration of dUTP so that uracil cannot be incorporated into DNA. In Janthinobacterium sp. (strain Marseille) (Minibacterium massiliensis), this protein is Deoxyuridine 5'-triphosphate nucleotidohydrolase.